A 343-amino-acid polypeptide reads, in one-letter code: Methylthioribose-1-phosphate isomerase (343 aa).

Residues 44–46, R85, and Q192 each bind substrate; that span reads RGA. The active-site Proton donor is the D233. A substrate-binding site is contributed by 243-244; the sequence is NK.

Belongs to the eIF-2B alpha/beta/delta subunits family. MtnA subfamily.

It carries out the reaction 5-(methylsulfanyl)-alpha-D-ribose 1-phosphate = 5-(methylsulfanyl)-D-ribulose 1-phosphate. The protein operates within amino-acid biosynthesis; L-methionine biosynthesis via salvage pathway; L-methionine from S-methyl-5-thio-alpha-D-ribose 1-phosphate: step 1/6. Catalyzes the interconversion of methylthioribose-1-phosphate (MTR-1-P) into methylthioribulose-1-phosphate (MTRu-1-P). The sequence is that of Methylthioribose-1-phosphate isomerase from Carboxydothermus hydrogenoformans (strain ATCC BAA-161 / DSM 6008 / Z-2901).